Here is a 219-residue protein sequence, read N- to C-terminus: 7-cyano-7-deazaguanine synthase (219 aa).

Position 10–20 (10–20) interacts with ATP; it reads FSGGQDSTTCL. The Zn(2+) site is built by cysteine 188, cysteine 196, cysteine 199, and cysteine 202.

Belongs to the QueC family. It depends on Zn(2+) as a cofactor.

The catalysed reaction is 7-carboxy-7-deazaguanine + NH4(+) + ATP = 7-cyano-7-deazaguanine + ADP + phosphate + H2O + H(+). Its pathway is purine metabolism; 7-cyano-7-deazaguanine biosynthesis. Catalyzes the ATP-dependent conversion of 7-carboxy-7-deazaguanine (CDG) to 7-cyano-7-deazaguanine (preQ(0)). This chain is 7-cyano-7-deazaguanine synthase, found in Neisseria meningitidis serogroup C / serotype 2a (strain ATCC 700532 / DSM 15464 / FAM18).